A 259-amino-acid chain; its full sequence is uncharacterized protein (259 aa).

Residues 1–159 (MIEQFFRPDS…TEIIIKDPYR (159 aa)) enclose the FAD-binding PCMH-type domain.

This is an uncharacterized protein from Escherichia coli O157:H7.